The primary structure comprises 217 residues: 3-demethoxyubiquinol 3-hydroxylase (217 aa).

Fe cation contacts are provided by glutamate 66, glutamate 96, histidine 99, glutamate 148, glutamate 180, and histidine 183.

Belongs to the COQ7 family. The cofactor is Fe cation.

Its subcellular location is the cell membrane. The catalysed reaction is a 5-methoxy-2-methyl-3-(all-trans-polyprenyl)benzene-1,4-diol + AH2 + O2 = a 3-demethylubiquinol + A + H2O. The protein operates within cofactor biosynthesis; ubiquinone biosynthesis. In terms of biological role, catalyzes the hydroxylation of 2-nonaprenyl-3-methyl-6-methoxy-1,4-benzoquinol during ubiquinone biosynthesis. This chain is 3-demethoxyubiquinol 3-hydroxylase, found in Xanthomonas campestris pv. campestris (strain 8004).